Here is a 279-residue protein sequence, read N- to C-terminus: NADPH-dependent 7-cyano-7-deazaguanine reductase (279 aa).

Substrate is bound at residue 86–88 (IES). 88-89 (SK) serves as a coordination point for NADPH. Residue cysteine 187 is the Thioimide intermediate of the active site. Residue aspartate 194 is the Proton donor of the active site. Position 226-227 (226-227 (HE)) interacts with substrate. 255-256 (RG) serves as a coordination point for NADPH.

The protein belongs to the GTP cyclohydrolase I family. QueF type 2 subfamily. In terms of assembly, homodimer.

It is found in the cytoplasm. The catalysed reaction is 7-aminomethyl-7-carbaguanine + 2 NADP(+) = 7-cyano-7-deazaguanine + 2 NADPH + 3 H(+). The protein operates within tRNA modification; tRNA-queuosine biosynthesis. In terms of biological role, catalyzes the NADPH-dependent reduction of 7-cyano-7-deazaguanine (preQ0) to 7-aminomethyl-7-deazaguanine (preQ1). This is NADPH-dependent 7-cyano-7-deazaguanine reductase from Histophilus somni (strain 129Pt) (Haemophilus somnus).